The sequence spans 184 residues: Lipid A acyltransferase PagP (184 aa).

The signal sequence occupies residues Met-1–Ala-22. Active-site residues include His-57, Asp-100, and Ser-101.

This sequence belongs to the lipid A palmitoyltransferase family. In terms of assembly, homodimer.

It localises to the cell outer membrane. The catalysed reaction is a lipid A + a 1,2-diacyl-sn-glycero-3-phosphocholine = a hepta-acyl lipid A + a 2-acyl-sn-glycero-3-phosphocholine. The enzyme catalyses a lipid IVA + a 1,2-diacyl-sn-glycero-3-phosphocholine = a lipid IVB + a 2-acyl-sn-glycero-3-phosphocholine. It catalyses the reaction a lipid IIA + a 1,2-diacyl-sn-glycero-3-phosphocholine = a lipid IIB + a 2-acyl-sn-glycero-3-phosphocholine. Transfers a fatty acid residue from the sn-1 position of a phospholipid to the N-linked hydroxyfatty acid chain on the proximal unit of lipid A or its precursors. This Methylobacillus flagellatus (strain ATCC 51484 / DSM 6875 / VKM B-1610 / KT) protein is Lipid A acyltransferase PagP.